A 121-amino-acid chain; its full sequence is MNLYEHTIVARQDTSPAQVKQLTEKYSKIVEKNEGEIVQTEDWGLLNLAYIIKKNKKGIYMHFKIKGPGKIIDELEKNEAIDKNLLRYMTVKVKKFNLEAKYFSKKDEYEKKEYKKEYNRD.

The protein belongs to the bacterial ribosomal protein bS6 family.

Functionally, binds together with bS18 to 16S ribosomal RNA. The protein is Small ribosomal subunit protein bS6 of Pelagibacter ubique (strain HTCC1062).